A 372-amino-acid chain; its full sequence is Fatty acid conjugase FAC2 B (372 aa).

Transmembrane regions (helical) follow at residues 44-64 (YFLFHDIIVTCILFYVASNYI) and 74-94 (IVWPVYWISQGVFLGRLWMIG). The Histidine box-1 signature appears at 95–99 (HECGH). Residues 131 to 135 (HRNHH) carry the Histidine box-2 motif. The next 3 helical transmembrane spans lie at 166 to 186 (IGLMITMLCKLTFGYAAYIMF), 217 to 237 (VLFSDIGICIVLYACYRIVTV), and 240 to 260 (AMPAFYVYGIPWVIMSAILFA). The Histidine box-3 signature appears at 304-308 (HVIHH).

This sequence belongs to the fatty acid desaturase type 1 family. Expressed exclusively in the developing seeds. Not detected in leaves.

It is found in the microsome membrane. It carries out the reaction a (9Z,12Z)-octadecadienoyl-containing glycerolipid + AH2 + O2 = a (8E,10E,12Z)-octadecatrienoyl-containing glycerolipid + A + 2 H2O. The protein operates within lipid metabolism; polyunsaturated fatty acid biosynthesis. Its function is as follows. Fatty acid conjugase converting 18:2(9Z, 12Z) to calendic acid 18:3(8E, 10E, 12Z). Converts alpha-linolenic acid (18:3(9Z, 12Z, 15Z)) into 18:4(8E, 10E, 12Z, 15Z). Also has weak activity on the mono-unsaturates 16:1(9Z) and 18:1(9Z) producing two conjugated double bonds at delta(8) and delta(10) position. The protein is Fatty acid conjugase FAC2 B of Calendula officinalis (Pot marigold).